Consider the following 210-residue polypeptide: Holliday junction resolvase RecU (210 aa).

Positions 1–34 (MAFHYPNGQPYSNHETKQPKKQGRHTSPTTLYGK) are disordered. The Mg(2+) site is built by threonine 90, aspartate 92, glutamate 105, and glutamine 124.

Belongs to the RecU family. Mg(2+) is required as a cofactor.

It is found in the cytoplasm. It catalyses the reaction Endonucleolytic cleavage at a junction such as a reciprocal single-stranded crossover between two homologous DNA duplexes (Holliday junction).. Endonuclease that resolves Holliday junction intermediates in genetic recombination. Cleaves mobile four-strand junctions by introducing symmetrical nicks in paired strands. Promotes annealing of linear ssDNA with homologous dsDNA. Required for DNA repair, homologous recombination and chromosome segregation. This Latilactobacillus sakei subsp. sakei (strain 23K) (Lactobacillus sakei subsp. sakei) protein is Holliday junction resolvase RecU.